The following is a 279-amino-acid chain: Ribosomal RNA small subunit methyltransferase J (279 aa).

Residues 138–139 and Asp-194 contribute to the S-adenosyl-L-methionine site; that span reads ER.

Belongs to the methyltransferase superfamily. RsmJ family.

The protein resides in the cytoplasm. The catalysed reaction is guanosine(1516) in 16S rRNA + S-adenosyl-L-methionine = N(2)-methylguanosine(1516) in 16S rRNA + S-adenosyl-L-homocysteine + H(+). Functionally, specifically methylates the guanosine in position 1516 of 16S rRNA. This chain is Ribosomal RNA small subunit methyltransferase J, found in Acinetobacter baumannii (strain AYE).